The sequence spans 271 residues: Glutamate racemase (271 aa).

Residues 13–14 and 45–46 contribute to the substrate site; these read DS and YG. Residue Cys77 is the Proton donor/acceptor of the active site. A substrate-binding site is contributed by 78–79; it reads NT. The active-site Proton donor/acceptor is the Cys192. Residue 193-194 coordinates substrate; sequence TH.

It belongs to the aspartate/glutamate racemases family.

It carries out the reaction L-glutamate = D-glutamate. The protein operates within cell wall biogenesis; peptidoglycan biosynthesis. In terms of biological role, provides the (R)-glutamate required for cell wall biosynthesis. In Sinorhizobium medicae (strain WSM419) (Ensifer medicae), this protein is Glutamate racemase.